A 152-amino-acid chain; its full sequence is Outer membrane protein assembly factor BamE (152 aa).

Residues 1 to 32 (MIDQNHDSEEQAQMQKLTRTVTLTVALTLVSG) form the signal peptide. C33 is lipidated: N-palmitoyl cysteine. A lipid anchor (S-diacylglycerol cysteine) is attached at C33. Residues 114 to 152 (IDRHGDFSRPPSVADERGIGPTDSTNARGNLLNARPDDE) form a disordered region.

The protein belongs to the BamE family. Part of the Bam complex.

Its subcellular location is the cell outer membrane. Part of the outer membrane protein assembly complex, which is involved in assembly and insertion of beta-barrel proteins into the outer membrane. This chain is Outer membrane protein assembly factor BamE, found in Halomonas elongata (strain ATCC 33173 / DSM 2581 / NBRC 15536 / NCIMB 2198 / 1H9).